A 334-amino-acid polypeptide reads, in one-letter code: Beta-ketoacyl-[acyl-carrier-protein] synthase III (334 aa).

Catalysis depends on residues Cys-114 and His-253. Positions 254-258 (QANIR) are ACP-binding. The active site involves Asn-283.

It belongs to the thiolase-like superfamily. FabH family. Homodimer.

Its subcellular location is the cytoplasm. The catalysed reaction is malonyl-[ACP] + acetyl-CoA + H(+) = 3-oxobutanoyl-[ACP] + CO2 + CoA. The protein operates within lipid metabolism; fatty acid biosynthesis. Functionally, catalyzes the condensation reaction of fatty acid synthesis by the addition to an acyl acceptor of two carbons from malonyl-ACP. Catalyzes the first condensation reaction which initiates fatty acid synthesis and may therefore play a role in governing the total rate of fatty acid production. Possesses both acetoacetyl-ACP synthase and acetyl transacylase activities. Its substrate specificity determines the biosynthesis of branched-chain and/or straight-chain of fatty acids. The polypeptide is Beta-ketoacyl-[acyl-carrier-protein] synthase III (Campylobacter curvus (strain 525.92)).